Consider the following 915-residue polypeptide: Mitogen-activated protein kinase kinae kinase MST11 (915 aa).

Disordered stretches follow at residues 1-65, 134-171, and 183-249; these read MAML…PKHW, KKRN…NPSV, and GMAY…TRTD. Low complexity predominate over residues 26 to 45; it reads AQASYPPSRRAPAVPPASQS. The SAM domain occupies 65-128; the sequence is WDEDKVCEYL…FLSIKKLRTK (64 aa). Composition is skewed to low complexity over residues 152–163 and 188–203; these read SESPSKPFHSSS and PSRP…PLPS. The Ras-associating domain occupies 263–353; it reads NQDVIRVIST…NRLILRRVPA (91 aa). The Protein kinase domain occupies 641–911; the sequence is WMKGALIGQG…ADDLMLSPFL (271 aa). ATP-binding positions include 647-655 and lysine 670; that span reads IGQGSFGCV.

This sequence belongs to the protein kinase superfamily. STE Ser/Thr protein kinase family. MAP kinase kinase kinase subfamily. In terms of assembly, interacts with the adapter protein MST50.

The catalysed reaction is L-seryl-[protein] + ATP = O-phospho-L-seryl-[protein] + ADP + H(+). It catalyses the reaction L-threonyl-[protein] + ATP = O-phospho-L-threonyl-[protein] + ADP + H(+). Mitogen-activated protein kinase kinase kinase; part of the MST11-MST7-PMK1 MAP kinase (MAPK) cascade that is essential for appressorium formation, penetration and invasive growth. The MST11-MST7-PMK1 MAP kinase cascade transduces signals from the cell surface sensors MDB2 and SHO1 that recognize various surface signals such as surface hydrophobicity, cutin monomers, and rice leaf waxes. MST11 acts as the upstream MAPKKK that directly phosphorylates MAPKK MST7. MST11 but not MST7 may also be involved in the OSM1 MAPK pathway in response to osmotic stresses. The protein is Mitogen-activated protein kinase kinae kinase MST11 of Pyricularia oryzae (strain 70-15 / ATCC MYA-4617 / FGSC 8958) (Rice blast fungus).